Consider the following 216-residue polypeptide: Probable glutamine ABC transporter permease protein GlnM (216 aa).

The region spanning 17-205 (FYHTLLASVI…VLTIPLSIGV (189 aa)) is the ABC transmembrane type-1 domain. The next 5 membrane-spanning stretches (helical) occupy residues 21-41 (LLAS…VAVM), 63-83 (IPLL…GLRL), 85-105 (GFQA…AEAI), 132-152 (LHII…NQFL), and 181-201 (LVVF…TIPL).

The protein belongs to the binding-protein-dependent transport system permease family. As to quaternary structure, the complex is composed of two ATP-binding proteins (GlnQ), two transmembrane proteins (GlnM and GlnP) and a solute-binding protein (GlnH).

The protein localises to the cell membrane. Its function is as follows. Part of the ABC transporter complex GlnHMPQ involved in glutamine transport. Probably responsible for the translocation of the substrate across the membrane. This chain is Probable glutamine ABC transporter permease protein GlnM (glnM), found in Bacillus subtilis (strain 168).